Reading from the N-terminus, the 371-residue chain is Transaldolase (371 aa).

K140 acts as the Schiff-base intermediate with substrate in catalysis.

The protein belongs to the transaldolase family. Type 2 subfamily.

The protein resides in the cytoplasm. It carries out the reaction D-sedoheptulose 7-phosphate + D-glyceraldehyde 3-phosphate = D-erythrose 4-phosphate + beta-D-fructose 6-phosphate. The protein operates within carbohydrate degradation; pentose phosphate pathway; D-glyceraldehyde 3-phosphate and beta-D-fructose 6-phosphate from D-ribose 5-phosphate and D-xylulose 5-phosphate (non-oxidative stage): step 2/3. Its function is as follows. Transaldolase is important for the balance of metabolites in the pentose-phosphate pathway. The chain is Transaldolase from Arthrobacter sp. (strain FB24).